The chain runs to 402 residues: Nicotinate phosphoribosyltransferase (402 aa).

Phosphohistidine; by autocatalysis is present on His-224.

It belongs to the NAPRTase family. In terms of processing, transiently phosphorylated on a His residue during the reaction cycle. Phosphorylation strongly increases the affinity for substrates and increases the rate of nicotinate D-ribonucleotide production. Dephosphorylation regenerates the low-affinity form of the enzyme, leading to product release.

It carries out the reaction nicotinate + 5-phospho-alpha-D-ribose 1-diphosphate + ATP + H2O = nicotinate beta-D-ribonucleotide + ADP + phosphate + diphosphate. It participates in cofactor biosynthesis; NAD(+) biosynthesis; nicotinate D-ribonucleotide from nicotinate: step 1/1. Catalyzes the synthesis of beta-nicotinate D-ribonucleotide from nicotinate and 5-phospho-D-ribose 1-phosphate at the expense of ATP. The protein is Nicotinate phosphoribosyltransferase of Neisseria meningitidis serogroup B (strain ATCC BAA-335 / MC58).